We begin with the raw amino-acid sequence, 498 residues long: Putative antiporter subunit mnhD2 (498 aa).

14 consecutive transmembrane segments (helical) span residues 2–22, 32–52, 78–98, 108–128, 130–150, 161–181, 209–229, 240–260, 271–291, 308–328, 330–350, 369–389, 406–426, and 451–471; these read LSNL…ILVF, YLYL…LIYV, LSLI…AYGF, YHLP…FLTS, LFNL…LITL, IIYV…IGLL, ISLI…FMWL, LAAL…IRFF, IHPL…IGVI, IGFI…GAIF, LVND…LVYI, FGVA…FSGF, IGLA…FRIF, and ILSI…VVLN.

It belongs to the CPA3 antiporters (TC 2.A.63) subunit D family. In terms of assembly, may form a heterooligomeric complex that consists of seven subunits: mnhA2, mnhB2, mnhC2, mnhD2, mnhE2, mnhF2 and mnhG2.

The protein resides in the cell membrane. The protein is Putative antiporter subunit mnhD2 (mnhD2) of Staphylococcus aureus (strain Mu3 / ATCC 700698).